We begin with the raw amino-acid sequence, 578 residues long: Solute carrier family 15 member 3 (578 aa).

Residues 1–15 (MSAPRAEEQPSRSGE) show a composition bias toward basic and acidic residues. Residues 1–27 (MSAPRAEEQPSRSGERQPLVARGPRGP) are disordered. Transmembrane regions (helical) follow at residues 33 to 53 (TAAAAVLLVQMLERAAFFGVT), 77 to 97 (LLFLGASYLLAPVGGWLADVY), 102 to 122 (LTISLSLLLYLAASGLLLTTI), 155 to 175 (PYCATTLYLVLLLLALAASSV), and 201 to 221 (WFYWSINLGAILSLLVVAFIE). A glycan (N-linked (GlcNAc...) asparagine) is linked at N223. The chain crosses the membrane as a helical span at residues 232-252 (IIVGLVGLAFFIFLFATPVFI). Residues 280–301 (SRDSESAHLLPDQRSNQPGPSP) form a disordered region. The helical transmembrane segment at 308 to 328 (FQVLVKILPVMVTLVPYWMVY) threads the bilayer. N353 carries N-linked (GlcNAc...) asparagine glycosylation. 2 consecutive transmembrane segments (helical) span residues 367–387 (IPEAWLLLANVAVILILIPVK) and 405–425 (LQKMALGMFFGFTSIIVAGVL). A glycan (N-linked (GlcNAc...) asparagine) is linked at N436. 3 helical membrane-spanning segments follow: residues 462–481 (YLLIGVSEIFASIPGLEFAY), 494–514 (GIFFCLSGVGSLLGSGLVALL), and 538–558 (YFFLLAGIEAVTAVLFLWIAG).

It belongs to the major facilitator superfamily. Proton-dependent oligopeptide transporter (POT/PTR) (TC 2.A.17) family. As to expression, expressed highly in bone marrow derived macrophages, and weakly in spleen and lung. Expressed in plasmacytoid dendritic cells (pDCs) in response to toll-like receptors (TLR) stimulation.

Its subcellular location is the lysosome membrane. The protein localises to the endosome membrane. The catalysed reaction is N-acetyl-D-muramoyl-L-alanyl-D-isoglutamine(out) + n H(+)(out) = N-acetyl-D-muramoyl-L-alanyl-D-isoglutamine(in) + n H(+)(in). It carries out the reaction glycylglycylglycine(out) + n H(+)(out) = glycylglycylglycine(in) + n H(+)(in). It catalyses the reaction carnosine(out) + n H(+)(out) = carnosine(in) + n H(+)(in). The enzyme catalyses L-histidine(out) + n H(+)(out) = L-histidine(in) + n H(+)(in). Its function is as follows. Proton-coupled amino-acid transporter that transports free histidine and certain di- and tripeptides, and is involved in innate immune response. Also able to transport carnosine. Involved in the detection of microbial pathogens by toll-like receptors (TLRs) and NOD-like receptors (NLRs), probably by mediating transport of bacterial peptidoglycans across the endolysosomal membrane: catalyzes the transport of certain bacterial peptidoglycans, such as muramyl dipeptide (MDP), the NOD2 ligand. The protein is Solute carrier family 15 member 3 of Mus musculus (Mouse).